Reading from the N-terminus, the 256-residue chain is Undecaprenyl-diphosphatase (256 aa).

A run of 8 helical transmembrane segments spans residues 5 to 25 (IIEI…PISS), 41 to 61 (NSLM…VFYF), 74 to 94 (LLSL…VISS), 100 to 120 (LLEN…IILY), 135 to 155 (LNFK…IPGV), 180 to 200 (FLLA…NAIG), 208 to 228 (LVLI…KFFL), and 234 to 254 (FSLN…FIII).

This sequence belongs to the UppP family.

It is found in the cell inner membrane. It catalyses the reaction di-trans,octa-cis-undecaprenyl diphosphate + H2O = di-trans,octa-cis-undecaprenyl phosphate + phosphate + H(+). Functionally, catalyzes the dephosphorylation of undecaprenyl diphosphate (UPP). Confers resistance to bacitracin. This Pelagibacter ubique (strain HTCC1062) protein is Undecaprenyl-diphosphatase.